Here is a 976-residue protein sequence, read N- to C-terminus: Vacuolar membrane protease (976 aa).

Residues 1–51 lie on the Cytoplasmic side of the membrane; sequence MPLSTGLTLSSLNVMEKADNHYNMMTKQPPALSPVDMVSSRRGFNPIAFTP. The chain crosses the membrane as a helical span at residues 52 to 72; the sequence is WPVTILSSLVYLAFIIPIIVV. Residues 73-399 lie on the Vacuolar side of the membrane; the sequence is HHLVPPAPKE…DNGNDGKLNN (327 aa). N-linked (GlcNAc...) asparagine glycans are attached at residues N147 and N150. Positions 206 and 218 each coordinate Zn(2+). E252 acts as the Proton acceptor in catalysis. Zn(2+) contacts are provided by E253, E278, and H351. A helical transmembrane segment spans residues 400–420; the sequence is GAGTLGVWFDFYGSSFAVFEL. The Cytoplasmic portion of the chain corresponds to 421–427; sequence NTLFGHS. Residues 428-448 form a helical membrane-spanning segment; sequence VALLVVAPLLLIATCVTLYTL. Residues 449-477 lie on the Vacuolar side of the membrane; that stretch reads DKMYMFSMYTYLSESGGQVSLYGLRGLFR. Residues 478–498 traverse the membrane as a helical segment; it reads FPLILGISTALTIGLAFLLMK. Topologically, residues 499 to 519 are cytoplasmic; the sequence is ANPFIIYSSPYAVWNPSALHR. The chain crosses the membrane as a helical span at residues 520–540; the sequence is AYAFTWMFGMMWVLLVIATVY. Residues 541–550 lie on the Vacuolar side of the membrane; it reads QKQHGIASSY. A helical transmembrane segment spans residues 551–571; that stretch reads FIVFYFAGVSIATWISYLELF. Residues 572 to 675 are Cytoplasmic-facing; that stretch reads GLPTTQDYAR…HRLEQRWSIN (104 aa). Residues 590–633 form a disordered region; sequence TPSSDSRLLAPSADELPPSGSAAGHDFNPEDVEDEEPTESTSLL. Residues 618–627 are compositionally biased toward acidic residues; the sequence is PEDVEDEEPT. Residues 676 to 696 form a helical membrane-spanning segment; that stretch reads LISSAWILQFLFVAPIVIILL. The Vacuolar portion of the chain corresponds to 697 to 718; it reads GQLGLFLTSATYQIGADGGSQL. Residues 719–739 traverse the membrane as a helical segment; sequence VIYVGIAVLSVLILLPLFPFI. The Cytoplasmic segment spans residues 740–745; it reads HRFTYH. A helical transmembrane segment spans residues 746 to 766; it reads IPTFLLFVLIGTLVYNLTAFP. The Vacuolar segment spans residues 767 to 976; it reads FSHSNRLKVA…LVEGSHSFKL (210 aa). The N-linked (GlcNAc...) asparagine glycan is linked to N848.

The protein belongs to the peptidase M28 family. Zn(2+) serves as cofactor.

The protein localises to the vacuole membrane. In terms of biological role, may be involved in vacuolar sorting and osmoregulation. The chain is Vacuolar membrane protease from Arthroderma otae (strain ATCC MYA-4605 / CBS 113480) (Microsporum canis).